The following is a 1020-amino-acid chain: Sodium/potassium-transporting ATPase subunit alpha-2 (1020 aa).

A propeptide spanning residues 1–5 (MGRGA) is cleaved from the precursor. The disordered stretch occupies residues 1–31 (MGRGAGREYSPAATTAENGGGKKKQKEKELD). Residues 6-85 (GREYSPAATT…NALTPPPTTP (80 aa)) lie on the Cytoplasmic side of the membrane. Serine 10 bears the Phosphoserine mark. The interaction with phosphoinositide-3 kinase stretch occupies residues 80 to 82 (PPP). Residues 86–106 (EWVKFCRQLFGGFSILLWIGA) form a helical membrane-spanning segment. The Extracellular portion of the chain corresponds to 107–129 (ILCFLAYGIQAAMEDEPSNDNLY). A helical transmembrane segment spans residues 130–150 (LGVVLAAVVIVTGCFSYYQEA). Residues 151–286 (KSSKIMDSFK…VGRTPIAMEI (136 aa)) lie on the Cytoplasmic side of the membrane. A compositionally biased stretch (polar residues) spans 212 to 227 (DNSSLTGESEPQTRSP). The disordered stretch occupies residues 212–231 (DNSSLTGESEPQTRSPEFTH). A helical transmembrane segment spans residues 287–306 (EHFIQLITGVAVFPGVSFFV). Topologically, residues 307-318 (LSLILGYSWLEA) are extracellular. A helical membrane pass occupies residues 319–336 (VIFLIGIIVANVPEGLLA). Residues 337-769 (TVTVCLTLTA…EEGRLVFDNL (433 aa)) are Cytoplasmic-facing. Aspartate 374 (4-aspartylphosphate intermediate) is an active-site residue. Phosphoserine occurs at positions 439, 450, 496, and 559. Threonine 570 carries the phosphothreonine modification. A phosphoserine mark is found at serine 587 and serine 672. Positions 714 and 718 each coordinate Mg(2+). A helical membrane pass occupies residues 770–789 (KKSIAYTLTSNIPEITPFLL). The Extracellular portion of the chain corresponds to 790-799 (FIIANIPLPL). A helical transmembrane segment spans residues 800 to 820 (GTVTILCIDLGTDMVPAISLA). Topologically, residues 821-840 (YEAAESDIMKRQPRNSQTDK) are cytoplasmic. Serine 826 carries the post-translational modification Phosphoserine. A helical transmembrane segment spans residues 841–863 (LVNERLISMAYGQIGMIQALGGF). Residues 864–915 (FTYFVILAENGFLPSRLLGIRLDWDDRTMNDLEDSYGQEWTYEQRKVVEFTC) are Extracellular-facing. Residues 916–935 (HTAFFASIVVVQWADLIICK) traverse the membrane as a helical segment. Residues 936-948 (TRRNSVFQQGMKN) lie on the Cytoplasmic side of the membrane. At serine 940 the chain carries Phosphoserine; by PKA. Residues 949-967 (KILIFGLLEETALAAFLSY) traverse the membrane as a helical segment. Residues 968–982 (CPGMGVALRMYPLKV) are Extracellular-facing. The chain crosses the membrane as a helical span at residues 983–1003 (TWWFCAFPYSLLIFIYDEVRK). At 1004–1020 (LILRRYPGGWVEKETYY) the chain is on the cytoplasmic side.

It belongs to the cation transport ATPase (P-type) (TC 3.A.3) family. Type IIC subfamily. In terms of assembly, the sodium/potassium-transporting ATPase is composed of a catalytic alpha subunit, an auxiliary non-catalytic beta subunit and an additional regulatory subunit. Interacts with regulatory subunit FXYD1.

The protein localises to the membrane. It is found in the cell membrane. It carries out the reaction K(+)(out) + Na(+)(in) + ATP + H2O = K(+)(in) + Na(+)(out) + ADP + phosphate + H(+). This is the catalytic component of the active enzyme, which catalyzes the hydrolysis of ATP coupled with the exchange of sodium and potassium ions across the plasma membrane. This action creates the electrochemical gradient of sodium and potassium, providing the energy for active transport of various nutrients. The protein is Sodium/potassium-transporting ATPase subunit alpha-2 (ATP1A2) of Pongo abelii (Sumatran orangutan).